Here is a 209-residue protein sequence, read N- to C-terminus: Kynurenine formamidase (209 aa).

Tryptophan 18 is a substrate binding site. Residues histidine 48, histidine 52, and aspartate 54 each contribute to the Zn(2+) site. Histidine 58 acts as the Proton donor/acceptor in catalysis. Zn(2+) is bound by residues histidine 160 and glutamate 172.

This sequence belongs to the Cyclase 1 superfamily. KynB family. As to quaternary structure, homodimer. Requires Zn(2+) as cofactor.

The enzyme catalyses N-formyl-L-kynurenine + H2O = L-kynurenine + formate + H(+). Its pathway is amino-acid degradation; L-tryptophan degradation via kynurenine pathway; L-kynurenine from L-tryptophan: step 2/2. Catalyzes the hydrolysis of N-formyl-L-kynurenine to L-kynurenine, the second step in the kynurenine pathway of tryptophan degradation. In Maricaulis maris (strain MCS10) (Caulobacter maris), this protein is Kynurenine formamidase.